A 323-amino-acid polypeptide reads, in one-letter code: Di/tripeptide transport ATP-binding protein DppF (323 aa).

Residues 5–254 (LTARDLTRHY…PLHPYTRALL (250 aa)) form the ABC transporter domain. An ATP-binding site is contributed by 47–54 (GESGCGKS).

The protein belongs to the ABC transporter superfamily. The complex is composed of two ATP-binding proteins (DppD and DppF), two transmembrane proteins (DppB and DppC) and a solute-binding protein (DppA1-A5). Five orthologous SBPs (DppA1-A5) are present in P.aeruginosa, which increases the substrate specificity of the DppBCDF transporter.

It is found in the cell inner membrane. The catalysed reaction is a dipeptide(out) + ATP + H2O = a dipeptide(in) + ADP + phosphate + H(+). Part of the ABC transporter DppABCDF involved in the uptake of various di/tripeptides. Is also involved in the uptake of phaseolotoxin, a toxic tripeptide inhibiting the enzyme ornithine carbamoyltransferase. Responsible for energy coupling to the transport system. The sequence is that of Di/tripeptide transport ATP-binding protein DppF from Pseudomonas aeruginosa (strain UCBPP-PA14).